Here is a 547-residue protein sequence, read N- to C-terminus: RNA polymerase sigma factor sigF, chloroplastic (547 aa).

A compositionally biased stretch (polar residues) spans 1-17 (MEATRNLVSSSPSFQTK). Disordered regions lie at residues 1–28 (MEATRNLVSSSPSFQTKTHLKSSYSSPS) and 54–79 (FPASVLSQEPREESRPLSHALRDDRT). Residues 1 to 55 (MEATRNLVSSSPSFQTKTHLKSSYSSPSSVVMLHDQTTTPVVNSRHLNSLSRHFP) constitute a chloroplast transit peptide. Basic and acidic residues predominate over residues 62–79 (EPREESRPLSHALRDDRT). Residues serine 94, serine 95, serine 174, serine 176, serine 177, and serine 180 each carry the phosphoserine; by CK2 modification. The disordered stretch occupies residues 163–226 (ANPSDNIKDS…QKTSAKKKYK (64 aa)). The span at 172-181 (SLSTSSSMSL) shows a compositional bias: low complexity. At threonine 249 the chain carries Phosphothreonine; by CK2. A Polymerase core binding motif is present at residues 335-348 (DLLQEGSMGLMKSV). A DNA-binding region (H-T-H motif) is located at residues 505–524 (LSEIGEIYGLSKERVRQLES).

This sequence belongs to the sigma-70 factor family. In terms of assembly, interacts (via N-terminus) with DG1 (via C-terminus). Phosphorylated to acquire sigma activity; site-specific phosphorylation regulates promoter affinity. Phosphorylation at Ser-174 by chloroplastic CK2 requires prior phosphorylation at Ser-177. Phosphorylation at either Ser-94, Ser-95 or Ser-174 is required for sigma activation. Expressed in seedling, accumulating progressively. Present in leaves but not in roots.

It localises to the plastid. The protein localises to the chloroplast. In terms of biological role, sigma factors are initiation factors that promote the attachment of plastid-encoded RNA polymerase (PEP) to specific initiation sites and are then released. Regulates transcription in chloroplast in a DG1-dependent manner. Involved in light-dependent chloroplast development. Required during early plant development and primary leaf formation. The polypeptide is RNA polymerase sigma factor sigF, chloroplastic (SIGF) (Arabidopsis thaliana (Mouse-ear cress)).